A 205-amino-acid polypeptide reads, in one-letter code: MSLNYIKNFYEGCVKPPTVIGQFHTLFFGSVRMFFLGVLGFAVYGNEALHFSCDPDKREINLFCYNQFRPITPQVFWALQLVIVLLPGAIFHLYAACKSINQDCILQKPVYTVIYVLSVLLRISLEVFAFWLQIHLFGFQVKPIYLCDTESLGKKPNILKCMVPEHFEKTIFLIAMYTFTVITMVLCVAEVFEIIFRRSCFLFKR.

At 1 to 22 (MSLNYIKNFYEGCVKPPTVIGQ) the chain is on the cytoplasmic side. The helical transmembrane segment at 23 to 43 (FHTLFFGSVRMFFLGVLGFAV) threads the bilayer. Residues 44–74 (YGNEALHFSCDPDKREINLFCYNQFRPITPQ) lie on the Extracellular side of the membrane. Intrachain disulfides connect cysteine 53-cysteine 161 and cysteine 64-cysteine 147. Residues 75 to 95 (VFWALQLVIVLLPGAIFHLYA) form a helical membrane-spanning segment. At 96 to 111 (ACKSINQDCILQKPVY) the chain is on the cytoplasmic side. A helical membrane pass occupies residues 112–132 (TVIYVLSVLLRISLEVFAFWL). Over 133–170 (QIHLFGFQVKPIYLCDTESLGKKPNILKCMVPEHFEKT) the chain is Extracellular. Residues 171–191 (IFLIAMYTFTVITMVLCVAEV) form a helical membrane-spanning segment. At 192-205 (FEIIFRRSCFLFKR) the chain is on the cytoplasmic side.

This sequence belongs to the connexin family. Beta-type (group I) subfamily. As to quaternary structure, a connexon is composed of a hexamer of connexins. In terms of tissue distribution, highly expressed in lens, where it is mainly found in lens fibers and to a lesser extent in lens epithelium. Weakly expressed in retina. Not detected in other tissues tested.

The protein resides in the cell membrane. Functionally, mediates calcium-independent ATP release, suggesting activity as a hemichannel. Does not form functional gap junctions. May play a non-essential role in eye lens development. The chain is Gap junction epsilon-1 protein from Mus musculus (Mouse).